Consider the following 219-residue polypeptide: Ribosomal RNA small subunit methyltransferase Nep1 (219 aa).

Residues Gly-178, Gly-183, and 196 to 201 each bind S-adenosyl-L-methionine; that span reads LYKAPL.

It belongs to the class IV-like SAM-binding methyltransferase superfamily. RNA methyltransferase NEP1 family. As to quaternary structure, homodimer.

The catalysed reaction is a pseudouridine in rRNA + S-adenosyl-L-methionine = an N(1)-methylpseudouridine in rRNA + S-adenosyl-L-homocysteine + H(+). Methyltransferase involved in ribosomal biogenesis. Specifically catalyzes the N1-methylation of the pseudouridine corresponding to position 914 in M.jannaschii 16S rRNA. This Thermococcus onnurineus (strain NA1) protein is Ribosomal RNA small subunit methyltransferase Nep1.